Consider the following 279-residue polypeptide: Large ribosomal subunit protein uL2 (279 aa).

The interval 222 to 279 (GVAMNPVDHPHGGGEGRTSGGRHPVTPAGKPTKGAKTRVNKATDKFIIRSRHKAKKGR) is disordered. Basic residues predominate over residues 269–279 (IRSRHKAKKGR).

It belongs to the universal ribosomal protein uL2 family. Part of the 50S ribosomal subunit. Forms a bridge to the 30S subunit in the 70S ribosome.

One of the primary rRNA binding proteins. Required for association of the 30S and 50S subunits to form the 70S ribosome, for tRNA binding and peptide bond formation. It has been suggested to have peptidyltransferase activity; this is somewhat controversial. Makes several contacts with the 16S rRNA in the 70S ribosome. The chain is Large ribosomal subunit protein uL2 from Caulobacter vibrioides (strain ATCC 19089 / CIP 103742 / CB 15) (Caulobacter crescentus).